Here is a 307-residue protein sequence, read N- to C-terminus: High-affinity branched-chain amino acid transport system permease protein BraD (307 aa).

10 helical membrane-spanning segments follow: residues 21–41 (YALI…INFA), 45–65 (VYMI…MMGL), 70–90 (LMML…GYSI), 104–124 (LIPL…VMLS), 132–152 (IPTL…GVVI), 154–174 (YMQI…TLFI), 203–223 (IIAL…VLLG), 224–244 (MQYG…AFTA), 245–265 (AVLG…LLGV), and 280–300 (DVVA…GILG).

The protein belongs to the binding-protein-dependent transport system permease family. LivHM subfamily.

The protein resides in the cell inner membrane. Component of the high affinity leucine, isoleucine, valine, transport system (LIV-I), which is operative without Na(+) and is specific for alanine and threonine, in addition to branched-chain amino acids. This Pseudomonas aeruginosa (strain ATCC 15692 / DSM 22644 / CIP 104116 / JCM 14847 / LMG 12228 / 1C / PRS 101 / PAO1) protein is High-affinity branched-chain amino acid transport system permease protein BraD (braD).